Reading from the N-terminus, the 471-residue chain is Uronate isomerase (471 aa).

It belongs to the metallo-dependent hydrolases superfamily. Uronate isomerase family.

It catalyses the reaction D-glucuronate = D-fructuronate. The enzyme catalyses aldehydo-D-galacturonate = keto-D-tagaturonate. The protein operates within carbohydrate metabolism; pentose and glucuronate interconversion. This chain is Uronate isomerase, found in Latilactobacillus sakei subsp. sakei (strain 23K) (Lactobacillus sakei subsp. sakei).